The chain runs to 274 residues: MVAPTALKKATVTPVSGQDGGSSRIIGINNTESIDEDDDDDVLLDDSDNNTAKEEVEGEEGSRKTHESKTVVVDDQGKPRFTSASKTQGNKIKFESRKIMVPPHRMTPLRNSWTKIYPPLVEHLKLQVRMNLKTKSVELRTNPKFTTDPGALQKGADFIKAFTLGFDLDDSIALLRLDDLYIETFEVKDVKTLTGDHLSRAIGRIAGKDGKTKFAIENATRTRIVLADSKIHILGGFTHIRMARESVVSLILGSPPGKVYGNLRTVASRLKERY.

The tract at residues 1 to 70 (MVAPTALKKA…GSRKTHESKT (70 aa)) is disordered. Residues 33–48 (SIDEDDDDDVLLDDSD) are compositionally biased toward acidic residues. A Phosphoserine modification is found at Ser47. Phosphothreonine is present on Thr51. Basic and acidic residues predominate over residues 51–69 (TAKEEVEGEEGSRKTHESK). Positions 195–247 (GDHLSRAIGRIAGKDGKTKFAIENATRTRIVLADSKIHILGGFTHIRMARESV) constitute a KH domain.

This sequence belongs to the PNO1 family. As to quaternary structure, component of the small ribosomal subunit, ribosomal RNA processing complex (SSU RRP complex). Interacts with NOB1.

The protein localises to the cytoplasm. It is found in the nucleus. The protein resides in the nucleolus. Functionally, required for small ribosomal subunit (SSU) synthesis. Has a role in the processing of early nucleolar and late cytoplasmic pre-RNA species. Recruits DIM1 to nucleolar pre-RNAs. Indirectly required for cleavage at the A2 site of the 20S pre-rRNA, forming 18S rRNA, and at A1 and A2 sites of other pre-rRNAs. This is Pre-rRNA-processing protein PNO1 (PNO1) from Saccharomyces cerevisiae (strain ATCC 204508 / S288c) (Baker's yeast).